We begin with the raw amino-acid sequence, 297 residues long: Coiled-coil domain-containing protein 196 (297 aa).

Residues 83–117 (ESSVMELLKEAEEMKQNLERKNKMLRKEMEMLWNK) are a coiled coil. Residues 122–161 (EELSDQQKAPQTKNKADLQDGKAPKSPSSPRKTESELEKS) form a disordered region. Composition is skewed to basic and acidic residues over residues 135–144 (NKADLQDGKA) and 152–161 (RKTESELEKS).

In Homo sapiens (Human), this protein is Coiled-coil domain-containing protein 196.